The primary structure comprises 703 residues: Calpain-8 (703 aa).

One can recognise a Calpain catalytic domain in the interval 45–344 (LFKDPEFPAC…YSRLEICNLS (300 aa)). Active-site residues include Cys105, His262, and Asn286. Positions 355–512 (KWNLVLFNGR…VFSEKKAKAL (158 aa)) are domain III. The tract at residues 513 to 531 (EIGDTVSGHPHEPHPRDMD) is linker. EF-hand domains lie at 532-566 (EEDEHVRSLFEEFVGKDSEISANQLKRVLNEVLSK), 575-608 (FNINTCREMISLLDSDGTGSLGPMEFKTLWLKIR), 605-640 (LKIRTYLEIFQEMDHNHVGTIEAHEMRTALKKAGFT), and 670-703 (IRLETLFKLFRLLDKDQNGIVQLSLAEWLCCVLV). A domain IV region spans residues 532-703 (EEDEHVRSLF…LAEWLCCVLV (172 aa)). Residues Asp588, Asp590, Thr592, Ser594, Glu599, Asp618, Asn620, Thr624, and Glu629 each contribute to the Ca(2+) site.

It belongs to the peptidase C2 family. As to quaternary structure, monomer and homooligomer. Interacts with COPS1/GPS1, COPB1, EYA2, NME2, NME4 and TOMM70. Ca(2+) serves as cofactor. In terms of processing, undergoes autolytic cleavage between Ala-5 and Ala-6 which gives rise to fragments extending from Ala-6 to the C-terminus, Ala-6 to the EF-hand 2 domain and from Ala-6 to the beginning of domain III. In terms of tissue distribution, predominantly expressed in the stomach. Localizes strictly to the surface mucus cells in the gastric epithelium and the mucus-secreting goblet cells in the duodenum. Detected in the pituitary after estrogen stimulation.

Its subcellular location is the cytoplasm. It localises to the golgi apparatus. The catalysed reaction is Broad endopeptidase specificity.. Its function is as follows. Calcium-regulated non-lysosomal thiol-protease. Involved in membrane trafficking in the gastric surface mucus cells (pit cells) and may involve the membrane trafficking of mucus cells via interactions with coat protein. Proteolytically cleaves the beta-subunit of coatomer complex. In Rattus norvegicus (Rat), this protein is Calpain-8 (Capn8).